A 152-amino-acid chain; its full sequence is uncharacterized protein (152 aa).

Residues 1–24 form the signal peptide; it reads MRKMLAYTLYIVTYLTYIMNEVEC.

This is an uncharacterized protein from Acheta domesticus (House cricket).